The primary structure comprises 1337 residues: Sister chromatid cohesion protein PDS5 homolog A (1337 aa).

Methionine 1 is modified (N-acetylmethionine). Residues alanine 393–tyrosine 429 form an HEAT repeat. Phosphoserine is present on serine 1097. Lysine 1146 carries the post-translational modification N6-acetyllysine. The segment at alanine 1150–arginine 1337 is disordered. Polar residues predominate over residues serine 1159 to asparagine 1180. Serine 1195 carries the post-translational modification Phosphoserine. Position 1208 is a phosphothreonine (threonine 1208). Lysine 1211 is modified (N6-acetyllysine). A compositionally biased stretch (polar residues) spans serine 1223 to serine 1233. Lysine 1290 is subject to N6-acetyllysine. Serine 1305 bears the Phosphoserine mark. Residues aspartate 1321–arginine 1337 show a composition bias toward basic and acidic residues.

Belongs to the PDS5 family. In terms of assembly, interacts with the cohesin complex. Interacts with WAPL (via FGF motifs) or CDCA5 (via the FGF motif); the interaction is direct, cohesin-dependent and competitive. Interacts with SMC3. Interacts with TP63. In terms of tissue distribution, highest level in colon. Low levels in lung, ovary, breast and kidney. Reduced level in renal tumor tissue. Isoform 2 is expressed in kidney.

It localises to the nucleus. Probable regulator of sister chromatid cohesion in mitosis which may stabilize cohesin complex association with chromatin. May couple sister chromatid cohesion during mitosis to DNA replication. Cohesion ensures that chromosome partitioning is accurate in both meiotic and mitotic cells and plays an important role in DNA repair. In Homo sapiens (Human), this protein is Sister chromatid cohesion protein PDS5 homolog A.